Consider the following 60-residue polypeptide: Prokaryotic ubiquitin-like protein UBact (60 aa).

The interval 1 to 60 (MPERKTQPTTDQPWTKPNDGGDESGPRSPEVERPNTRDLLERMKRVDPRQARRYRQRSGE) is disordered. Basic and acidic residues predominate over residues 29–50 (PEVERPNTRDLLERMKRVDPRQ). Residues 51–60 (ARRYRQRSGE) are compositionally biased toward basic residues. Residue E60 forms an Isoglutamyl lysine isopeptide (Glu-Lys) (interchain with K-? in acceptor proteins) linkage.

It belongs to the ubiquitin-like protein UBact family.

May function as a protein modifier covalently attached to lysine residues of substrate proteins. This may serve to target the modified proteins for degradation by proteasomes. The protein is Prokaryotic ubiquitin-like protein UBact of Fraserbacteria sp. (strain RBG_16_55_9).